The sequence spans 652 residues: Chaperone protein HtpG (652 aa).

The segment at 1–351 (MTEHVEQLEF…AQDLSLNVSR (351 aa)) is a; substrate-binding. The b stretch occupies residues 352 to 568 (EILQQDRQIQ…VFDFTPMLER (217 aa)). A c region spans residues 569-652 (MYRASGQPVP…ILTDRLTRTL (84 aa)).

This sequence belongs to the heat shock protein 90 family. Homodimer.

It is found in the cytoplasm. In terms of biological role, molecular chaperone. Has ATPase activity. The protein is Chaperone protein HtpG of Nocardia farcinica (strain IFM 10152).